The sequence spans 376 residues: Carbamoyl phosphate synthase small chain (376 aa).

The tract at residues 1 to 181 (MSKAVLVLED…VEPDGPPGVS (181 aa)) is nucleophile. Residues 1–183 (MSKAVLVLED…PDGPPGVSRF (183 aa)) are CPSase. The L-glutamine site is built by Ser46, Gly232, Gly234, Phe261, Gln264, Asn302, Gly304, and Phe305. Residues 184–376 (TVAALDLGIK…FVELMAGEGR (193 aa)) form the Glutamine amidotransferase type-1 domain. Residues His350 and Glu352 contribute to the active site.

The protein belongs to the CarA family. As to quaternary structure, composed of two chains; the small (or glutamine) chain promotes the hydrolysis of glutamine to ammonia, which is used by the large (or ammonia) chain to synthesize carbamoyl phosphate. Tetramer of heterodimers (alpha,beta)4.

The catalysed reaction is hydrogencarbonate + L-glutamine + 2 ATP + H2O = carbamoyl phosphate + L-glutamate + 2 ADP + phosphate + 2 H(+). It carries out the reaction L-glutamine + H2O = L-glutamate + NH4(+). It participates in amino-acid biosynthesis; L-arginine biosynthesis; carbamoyl phosphate from bicarbonate: step 1/1. It functions in the pathway pyrimidine metabolism; UMP biosynthesis via de novo pathway; (S)-dihydroorotate from bicarbonate: step 1/3. Small subunit of the glutamine-dependent carbamoyl phosphate synthetase (CPSase). CPSase catalyzes the formation of carbamoyl phosphate from the ammonia moiety of glutamine, carbonate, and phosphate donated by ATP, constituting the first step of 2 biosynthetic pathways, one leading to arginine and/or urea and the other to pyrimidine nucleotides. The small subunit (glutamine amidotransferase) binds and cleaves glutamine to supply the large subunit with the substrate ammonia. In Mycobacterium tuberculosis (strain CDC 1551 / Oshkosh), this protein is Carbamoyl phosphate synthase small chain.